A 300-amino-acid polypeptide reads, in one-letter code: MDFLMSGVAACGACVFTNPLEVVKTRMQLQGELQAPGTYQRHYRNVFHAFFTIGKVDGLAALQKGLGPALLYQFLMNGIRLGTYGLAESRGYLHTNEGTHSPVRSAAAGALAGVMGAYLGSPIYMVKTHLQAQAASEIAVGHQYKHQGMFQALTEIGQKHGLVGLWRGAVGGLPRVVIGSSTQLCTFSSIKDLLSQWEIFPPQSWKVALAAAMVSGVAIVVAMTPFDVASTRLYNQPTDTRGKGLMYRGILDALLQTARTEGFFGMYKGIGASYFRLGPHTILSLFFWDQLRSFYNTYAK.

Solcar repeat units lie at residues 1 to 90 (MDFL…AESR), 100 to 193 (HSPV…IKDL), and 203 to 294 (QSWK…LRSF). 6 helical membrane-spanning segments follow: residues 38-58 (TYQR…KVDG), 59-79 (LAAL…MNGI), 91-119 (GYLH…GAYL), 169-190 (AVGG…FSSI), 205-225 (WKVA…AMTP), and 277-300 (LGPH…TYAK).

It belongs to the mitochondrial carrier (TC 2.A.29) family.

The protein resides in the mitochondrion inner membrane. The catalysed reaction is a dicarboxylate(in) + sulfate(out) = a dicarboxylate(out) + sulfate(in). Putative antiporter that exchanges dicarboxylates and sulfur oxoanions across the inner membrane of mitochondria. In Mus musculus (Mouse), this protein is Solute carrier family 25 member 35 (Slc25a35).